A 497-amino-acid polypeptide reads, in one-letter code: Methionine--tRNA ligase (497 aa).

Residues 14-24 (YYVNDVPHLGH) carry the 'HIGH' region motif. 4 residues coordinate Zn(2+): cysteine 129, cysteine 132, cysteine 147, and histidine 150. The 'KMSKS' region motif lies at 295 to 299 (KMSKT). Lysine 298 provides a ligand contact to ATP.

The protein belongs to the class-I aminoacyl-tRNA synthetase family. MetG type 2A subfamily. Monomer. Requires Zn(2+) as cofactor.

The protein resides in the cytoplasm. It catalyses the reaction tRNA(Met) + L-methionine + ATP = L-methionyl-tRNA(Met) + AMP + diphosphate. Its function is as follows. Is required not only for elongation of protein synthesis but also for the initiation of all mRNA translation through initiator tRNA(fMet) aminoacylation. In Aquifex aeolicus (strain VF5), this protein is Methionine--tRNA ligase (metG).